The sequence spans 256 residues: Dihydromonacolin L-[lovastatin nonaketide synthase] thioesterase (256 aa).

Residues S122, D201, and H229 each act as charge relay system in the active site.

Belongs to the LovG family.

The enzyme catalyses dihydromonacolin L-[lovastatin nonaketide synthase] + H2O = holo-[lovastatin nonaketide synthase] + dihydromonacolin L carboxylate + H(+). The protein operates within polyketide biosynthesis; lovastatin biosynthesis. Functionally, esterase; part of the gene cluster that mediates the biosynthesis of lovastatin (also known as mevinolin, mevacor or monacolin K), a hypolipidemic inhibitor of (3S)-hydroxymethylglutaryl-coenzyme A (HMG-CoA) reductase (HMGR). The first step in the biosynthesis of lovastatin is the production of dihydromonacolin L acid by the lovastatin nonaketide synthase lovB and the trans-acting enoyl reductase lovC via condensation of one acetyl-CoA unit and 8 malonyl-CoA units. Dihydromonacolin L acid is released from lovB by the thioesterase lovG. Next, dihydromonacolin L acid is oxidized by the dihydromonacolin L monooxygenase lovA twice to form monacolin J acid. The 2-methylbutyrate moiety of lovastatin is synthesized by the lovastatin diketide synthase lovF via condensation of one acetyl-CoA unit and one malonyl-CoA unit. Finally, the covalent attachment of this moiety to monacolin J acid is catalyzed by the transesterase lovD to yield lovastatin. LovD has broad substrate specificity and can also convert monacolin J to simvastatin using alpha-dimethylbutanoyl-S-methyl-3-mercaptopropionate (DMB-S-MMP) as the thioester acyl donor, and can also catalyze the reverse reaction and function as hydrolase in vitro. LovD has much higher activity with LovF-bound 2-methylbutanoate than with free diketide substrates. Esterase that catalyzes the release of covalently bound dihydromonacolin L from LovB during lovastatin biosynthesis. This Aspergillus terreus protein is Dihydromonacolin L-[lovastatin nonaketide synthase] thioesterase.